The following is a 278-amino-acid chain: Indole-3-glycerol phosphate synthase (278 aa).

Belongs to the TrpC family.

The catalysed reaction is 1-(2-carboxyphenylamino)-1-deoxy-D-ribulose 5-phosphate + H(+) = (1S,2R)-1-C-(indol-3-yl)glycerol 3-phosphate + CO2 + H2O. It participates in amino-acid biosynthesis; L-tryptophan biosynthesis; L-tryptophan from chorismate: step 4/5. The protein is Indole-3-glycerol phosphate synthase of Pseudomonas aeruginosa (strain UCBPP-PA14).